The sequence spans 206 residues: Ribosomal RNA large subunit methyltransferase E (206 aa).

Positions 60, 62, 80, 96, and 121 each coordinate S-adenosyl-L-methionine. Lys161 functions as the Proton acceptor in the catalytic mechanism.

It belongs to the class I-like SAM-binding methyltransferase superfamily. RNA methyltransferase RlmE family.

It is found in the cytoplasm. The enzyme catalyses uridine(2552) in 23S rRNA + S-adenosyl-L-methionine = 2'-O-methyluridine(2552) in 23S rRNA + S-adenosyl-L-homocysteine + H(+). Functionally, specifically methylates the uridine in position 2552 of 23S rRNA at the 2'-O position of the ribose in the fully assembled 50S ribosomal subunit. This chain is Ribosomal RNA large subunit methyltransferase E, found in Nitrosomonas europaea (strain ATCC 19718 / CIP 103999 / KCTC 2705 / NBRC 14298).